We begin with the raw amino-acid sequence, 255 residues long: Adenylate dimethylallyltransferase (255 aa).

Belongs to the isopentenyl transferase family.

The enzyme catalyses dimethylallyl diphosphate + AMP = N(6)-(dimethylallyl)adenosine 5'-phosphate + diphosphate. Its function is as follows. Transfers dimethylallyl groups to AMP as part of the biosynthesis of cytokinin phytohormones. The sequence is that of Adenylate dimethylallyltransferase (fas4) from Rhodococcoides fascians (Rhodococcus fascians).